Here is a 31-residue protein sequence, read N- to C-terminus: Cyclotide Hyfl-A (31 aa).

Residues 1–31 (SISCGESCVYIPCTVTALVGCTCKDKVCYLN) constitute a cross-link (cyclopeptide (Ser-Asn)). 3 cysteine pairs are disulfide-bonded: Cys4–Cys21, Cys8–Cys23, and Cys13–Cys28.

It belongs to the cyclotide family. Bracelet subfamily. In terms of processing, this is a cyclic peptide.

In terms of biological role, probably participates in a plant defense mechanism. This is Cyclotide Hyfl-A from Hybanthus floribundus (Greenviolet).